Here is a 25-residue protein sequence, read N- to C-terminus: SPbeta prophage-derived uncharacterized protein YotF (25 aa).

This is SPbeta prophage-derived uncharacterized protein YotF (yotF) from Bacillus subtilis (strain 168).